The sequence spans 383 residues: Ribosomal RNA large subunit methyltransferase G (383 aa).

It belongs to the methyltransferase superfamily. RlmG family.

The protein resides in the cytoplasm. It catalyses the reaction guanosine(1835) in 23S rRNA + S-adenosyl-L-methionine = N(2)-methylguanosine(1835) in 23S rRNA + S-adenosyl-L-homocysteine + H(+). Specifically methylates the guanine in position 1835 (m2G1835) of 23S rRNA. The protein is Ribosomal RNA large subunit methyltransferase G of Shewanella amazonensis (strain ATCC BAA-1098 / SB2B).